We begin with the raw amino-acid sequence, 46 residues long: Succinate dehydrogenase subunit 8, mitochondrial (46 aa).

Component of complex II composed of eight subunits in plants: four classical SDH subunits SDH1, SDH2, SDH3 and SDH4 (a flavoprotein (FP), an iron-sulfur protein (IP), and a cytochrome b composed of a large and a small subunit.), as well as four subunits unknown in mitochondria from bacteria and heterotrophic eukaryotes.

The protein localises to the mitochondrion inner membrane. Its pathway is carbohydrate metabolism; tricarboxylic acid cycle. The protein is Succinate dehydrogenase subunit 8, mitochondrial of Arabidopsis thaliana (Mouse-ear cress).